A 134-amino-acid polypeptide reads, in one-letter code: MPDDDLQHRSQDILARLAAVIESRKIAHGGDPTKSYVARLLHQGPDAFLKKIGEEATEVVMAAKDADHGADKAKIICEVADLWFHCMVALAHYGLTPDQVLAELQRRAGSSGIEEKALRKLLGRGSADQARESP.

Belongs to the PRA-PH family.

Its subcellular location is the cytoplasm. It carries out the reaction 1-(5-phospho-beta-D-ribosyl)-ATP + H2O = 1-(5-phospho-beta-D-ribosyl)-5'-AMP + diphosphate + H(+). Its pathway is amino-acid biosynthesis; L-histidine biosynthesis; L-histidine from 5-phospho-alpha-D-ribose 1-diphosphate: step 2/9. The chain is Phosphoribosyl-ATP pyrophosphatase from Verminephrobacter eiseniae (strain EF01-2).